The following is a 765-amino-acid chain: 5-methyltetrahydropteroyltriglutamate--homocysteine methyltransferase (765 aa).

5-methyltetrahydropteroyltri-L-glutamate-binding positions include 16 to 19 (RELK) and K121. L-homocysteine-binding positions include 441–443 (IGS) and E494. L-methionine-binding positions include 441–443 (IGS) and E494. Residues 525–526 (RC) and W571 contribute to the 5-methyltetrahydropteroyltri-L-glutamate site. D609 is a binding site for L-homocysteine. An L-methionine-binding site is contributed by D609. E615 lines the 5-methyltetrahydropteroyltri-L-glutamate pocket. The Zn(2+) site is built by H651, C653, and E675. H704 acts as the Proton donor in catalysis. Residue C736 coordinates Zn(2+).

This sequence belongs to the vitamin-B12 independent methionine synthase family. Zn(2+) serves as cofactor.

The enzyme catalyses 5-methyltetrahydropteroyltri-L-glutamate + L-homocysteine = tetrahydropteroyltri-L-glutamate + L-methionine. It participates in amino-acid biosynthesis; L-methionine biosynthesis via de novo pathway; L-methionine from L-homocysteine (MetE route): step 1/1. In terms of biological role, catalyzes the transfer of a methyl group from 5-methyltetrahydrofolate to homocysteine resulting in methionine formation. The sequence is that of 5-methyltetrahydropteroyltriglutamate--homocysteine methyltransferase from Saccharophagus degradans (strain 2-40 / ATCC 43961 / DSM 17024).